A 173-amino-acid polypeptide reads, in one-letter code: Crossover junction endodeoxyribonuclease RuvC (173 aa).

Catalysis depends on residues D8, E67, and D139. Mg(2+)-binding residues include D8, E67, and D139.

It belongs to the RuvC family. As to quaternary structure, homodimer which binds Holliday junction (HJ) DNA. The HJ becomes 2-fold symmetrical on binding to RuvC with unstacked arms; it has a different conformation from HJ DNA in complex with RuvA. In the full resolvosome a probable DNA-RuvA(4)-RuvB(12)-RuvC(2) complex forms which resolves the HJ. Requires Mg(2+) as cofactor.

The protein resides in the cytoplasm. It carries out the reaction Endonucleolytic cleavage at a junction such as a reciprocal single-stranded crossover between two homologous DNA duplexes (Holliday junction).. Functionally, the RuvA-RuvB-RuvC complex processes Holliday junction (HJ) DNA during genetic recombination and DNA repair. Endonuclease that resolves HJ intermediates. Cleaves cruciform DNA by making single-stranded nicks across the HJ at symmetrical positions within the homologous arms, yielding a 5'-phosphate and a 3'-hydroxyl group; requires a central core of homology in the junction. The consensus cleavage sequence is 5'-(A/T)TT(C/G)-3'. Cleavage occurs on the 3'-side of the TT dinucleotide at the point of strand exchange. HJ branch migration catalyzed by RuvA-RuvB allows RuvC to scan DNA until it finds its consensus sequence, where it cleaves and resolves the cruciform DNA. The sequence is that of Crossover junction endodeoxyribonuclease RuvC from Tolumonas auensis (strain DSM 9187 / NBRC 110442 / TA 4).